A 117-amino-acid chain; its full sequence is Regulator of ribonuclease activity B (117 aa).

The protein belongs to the RraB family. In terms of assembly, interacts with the C-terminal region of Rne.

The protein resides in the cytoplasm. Globally modulates RNA abundance by binding to RNase E (Rne) and regulating its endonucleolytic activity. Can modulate Rne action in a substrate-dependent manner by altering the composition of the degradosome. This is Regulator of ribonuclease activity B from Pseudoalteromonas atlantica (strain T6c / ATCC BAA-1087).